The chain runs to 305 residues: Uracil-DNA glycosylase (305 aa).

The Proton acceptor role is filled by D148.

Belongs to the uracil-DNA glycosylase (UDG) superfamily. UNG family.

The protein resides in the host nucleus. It carries out the reaction Hydrolyzes single-stranded DNA or mismatched double-stranded DNA and polynucleotides, releasing free uracil.. Its function is as follows. Excises uracil residues from the DNA which can arise as a result of misincorporation of dUMP residues by DNA polymerase or deamination of cytosines. Therefore may reduce deleterious uracil incorporation into the viral genome, particularly in terminally differentiated cells which lack DNA repair enzymes. This is Uracil-DNA glycosylase from Varicella-zoster virus (strain Dumas) (HHV-3).